Reading from the N-terminus, the 1738-residue chain is Gag-Pol polyprotein (1738 aa).

A lipid anchor (N-myristoyl glycine; by host) is attached at glycine 2. The short motif at proline 111–proline 114 is the PTAP/PSAP motif element. Over residues proline 111 to threonine 124 the composition is skewed to pro residues. The tract at residues proline 111–arginine 218 is disordered. An LYPX(n)L motif motif is present at residues leucine 130–leucine 134. Residues aspartate 161 to proline 173 show a composition bias toward pro residues. The PPXY motif signature appears at proline 162–tyrosine 165. Serine 192 carries the post-translational modification Phosphoserine; by host. The tract at residues glycine 345–valine 393 is interaction with host PIAS4. The tract at residues isoleucine 430 to glutamate 435 is interaction with host UBE2I. Basic and acidic residues-rich tracts occupy residues arginine 434–arginine 466 and arginine 486–leucine 499. Disordered regions lie at residues arginine 434 to leucine 499 and tryptophan 513 to isoleucine 552. Positions glutamate 438 to leucine 478 form a coiled coil. A CCHC-type zinc finger spans residues aspartate 502–lysine 519. A Peptidase A2 domain is found at valine 561–leucine 631. Aspartate 566 serves as the catalytic Protease; shared with dimeric partner. One can recognise a Reverse transcriptase domain in the interval leucine 741–leucine 932. Residues aspartate 809, aspartate 883, aspartate 884, aspartate 1183, glutamate 1221, aspartate 1242, and aspartate 1312 each coordinate Mg(2+). Residues proline 1174–threonine 1320 form the RNase H type-1 domain. An HHCC-type zinc finger spans residues histidine 1387–cysteine 1427. The 159-residue stretch at arginine 1444–proline 1602 folds into the Integrase catalytic domain. Mg(2+) is bound by residues aspartate 1455 and aspartate 1514.

The protein belongs to the retroviral Pol polyprotein family. In terms of assembly, homohexamer; further associates as homomultimer. The virus core is composed of a lattice formed from hexagonal rings, each containing six capsid monomers. Interacts with mouse UBE2I and mouse PIAS4. Interacts (via PPXY motif) with host NEDD4. Interacts (via PSAP motif) with host TSG101. Interacts (via LYPX(n)L motif) with host PDCD6IP. As to quaternary structure, the reverse transcriptase is a monomer (Potential). Interacts (via RNase domains) with host release factor ETF1; this interaction is essential for translational readthrough of amber codon between viral gag and pol genes, as well as for viral replication. In terms of assembly, homodimer. It depends on Mg(2+) as a cofactor. Post-translationally, ubiquitinated by ITCH. Gag can recruit the ubiquitin ligase Itch in an L domain-independent manner to facilitate virus release via a mechanism that involves Gag ubiquitination. In terms of processing, specific enzymatic cleavages by the viral protease yield mature proteins. The protease is released by autocatalytic cleavage. The polyprotein is cleaved during and after budding, this process is termed maturation. Sumoylated; which is required for virus replication. Post-translationally, phosphorylated on serine residues.

The protein resides in the virion. Its subcellular location is the host cell membrane. It localises to the host late endosome membrane. It is found in the host endosome. The protein localises to the host multivesicular body. The protein resides in the host cytoplasm. It carries out the reaction DNA(n) + a 2'-deoxyribonucleoside 5'-triphosphate = DNA(n+1) + diphosphate. The catalysed reaction is Endonucleolytic cleavage to 5'-phosphomonoester.. Most efficiently inhibited by Amprenavir, which is able to block Gag-Pol processing in infected cells. Plays a role in budding and is processed by the viral protease during virion maturation outside the cell. During budding, it recruits, in a PPXY-dependent or independent manner, Nedd4-like ubiquitin ligases that conjugate ubiquitin molecules to Gag-Pol, or to Gag-Pol binding host factors. Interaction with HECT ubiquitin ligases probably links the viral protein to the host ESCRT pathway and facilitates release. Its function is as follows. Targets Gag and gag-pol polyproteins to the plasma membrane via a multipartite membrane binding signal, that includes its myristoylated N-terminus. Also mediates nuclear localization of the pre-integration complex. In terms of biological role, constituent of the pre-integration complex (PIC) which tethers the latter to mitotic chromosomes. This allows the integration of the viral genome into the host DNA. Functionally, forms the spherical core of the virion that encapsulates the genomic RNA-nucleocapsid complex. Involved in the packaging and encapsidation of two copies of the genome. Binds with high affinity to conserved UCUG elements within the packaging signal, located near the 5'-end of the genome. This binding is dependent on genome dimerization. Acts as a nucleic acid chaperone which is involved in rearrangement of nucleic acid secondary structures during gRNA retrotranscription. Its function is as follows. The aspartyl protease mediates proteolytic cleavages of Gag and Gag-Pol polyproteins during or shortly after the release of the virion from the plasma membrane. Cleavages take place as an ordered, step-wise cascade to yield mature proteins. This process is called maturation. Displays maximal activity during the budding process just prior to particle release from the cell (Potential). Cleaves the translation initiation factor eIF4G leading to the inhibition of host cap-dependent translation. In terms of biological role, RT is a multifunctional enzyme that converts the viral dimeric RNA genome into dsDNA in the cytoplasm, shortly after virus entry into the cell. This enzyme displays a DNA polymerase activity that can copy either DNA or RNA templates, and a ribonuclease H (RNase H) activity that cleaves the RNA strand of RNA-DNA heteroduplexes in a partially processive 3' to 5' endonucleasic mode. Conversion of viral genomic RNA into dsDNA requires many steps. A tRNA binds to the primer-binding site (PBS) situated at the 5' end of the viral RNA. RT uses the 3' end of the tRNA primer to perform a short round of RNA-dependent minus-strand DNA synthesis. The reading proceeds through the U5 region and ends after the repeated (R) region which is present at both ends of viral RNA. The portion of the RNA-DNA heteroduplex is digested by the RNase H, resulting in a ssDNA product attached to the tRNA primer. This ssDNA/tRNA hybridizes with the identical R region situated at the 3' end of viral RNA. This template exchange, known as minus-strand DNA strong stop transfer, can be either intra- or intermolecular. RT uses the 3' end of this newly synthesized short ssDNA to perform the RNA-dependent minus-strand DNA synthesis of the whole template. RNase H digests the RNA template except for a polypurine tract (PPT) situated at the 5' end of the genome. It is not clear if both polymerase and RNase H activities are simultaneous. RNase H probably can proceed both in a polymerase-dependent (RNA cut into small fragments by the same RT performing DNA synthesis) and a polymerase-independent mode (cleavage of remaining RNA fragments by free RTs). Secondly, RT performs DNA-directed plus-strand DNA synthesis using the PPT that has not been removed by RNase H as primers. PPT and tRNA primers are then removed by RNase H. The 3' and 5' ssDNA PBS regions hybridize to form a circular dsDNA intermediate. Strand displacement synthesis by RT to the PBS and PPT ends produces a blunt ended, linear dsDNA copy of the viral genome that includes long terminal repeats (LTRs) at both ends. Functionally, catalyzes viral DNA integration into the host chromosome, by performing a series of DNA cutting and joining reactions. This enzyme activity takes place after virion entry into a cell and reverse transcription of the RNA genome in dsDNA. The first step in the integration process is 3' processing. This step requires a complex comprising the viral genome, matrix protein and integrase. This complex is called the pre-integration complex (PIC). The integrase protein removes 2 nucleotides from each 3' end of the viral DNA, leaving recessed CA OH's at the 3' ends. In the second step that requires cell division, the PIC enters cell nucleus. In the third step, termed strand transfer, the integrase protein joins the previously processed 3' ends to the 5' ends of strands of target cellular DNA at the site of integration. The last step is viral DNA integration into host chromosome. The protein is Gag-Pol polyprotein (pol) of Friend murine leukemia virus (isolate PVC-211) (FrMLV).